A 142-amino-acid chain; its full sequence is Galactose-binding lectin (142 aa).

One can recognise a Galectin domain in the interval 1-141 (TYAEVESFGV…GTDIWDLLLL (141 aa)).

In terms of assembly, homotetramer.

Its activity is regulated as follows. Cytotoxic activity against L.infantum promastigotes is completely inhibited by D-galactose. Inhibition activity against biofilm formation by S.aureus and S.epidermidis is inhibited by alpha-lactose. Hemagglutination activity is inhibited by alpha-lactose (MIC=100 mM), beta-lactose (MIC=100 mM), lactulose (MIC=100 mM), bovine submaxillary mucin (BSM) (MIC=32 ug/ml), fetuin (MIC=16 ug/ml), porcine stomach mucin (PSM) type 2 (MIC=8 ug/ml) and PSM type 3 (MIC=8 ug/ml). Its function is as follows. Galactose-binding lectin. Displays antibacterial and hemagglutinin activity. Inhibits the growth of L.infantum promastigotes by damaging their membrane integrity and inducing cell apoptosis via the production of reactive oxygen species (ROS). Inhibition of L.infantum promastigotes appears to increase with time (MIC=1.2 uM/ml after 24 hours, MIC=0.9 uM/ml after 48 hours and MIC=0.6 uM/ml after 72 hours). Agglutinates Gram-negative and Gram-positive bacteria including E.coli, S.aureus and S.epidermidis, and inhibits biofilm formation by S.aureus and S.epidermidis. Displays hemagglutination activity towards all types of human erythrocytes (O, A and B) and rabbit erythrocytes. This chain is Galactose-binding lectin, found in Chondrilla caribensis (Chicken liver sponge).